The primary structure comprises 591 residues: Aspartate--tRNA(Asp/Asn) ligase (591 aa).

An L-aspartate-binding site is contributed by glutamate 175. Positions 199 to 202 (QQYK) are aspartate. Arginine 221 and histidine 450 together coordinate L-aspartate. Position 221–223 (221–223 (RDE)) interacts with ATP. Residue glutamate 484 participates in ATP binding. Residue arginine 491 coordinates L-aspartate. Position 536–539 (536–539 (GVDR)) interacts with ATP.

Belongs to the class-II aminoacyl-tRNA synthetase family. Type 1 subfamily. Homodimer.

Its subcellular location is the cytoplasm. It catalyses the reaction tRNA(Asx) + L-aspartate + ATP = L-aspartyl-tRNA(Asx) + AMP + diphosphate. Its function is as follows. Aspartyl-tRNA synthetase with relaxed tRNA specificity since it is able to aspartylate not only its cognate tRNA(Asp) but also tRNA(Asn). Reaction proceeds in two steps: L-aspartate is first activated by ATP to form Asp-AMP and then transferred to the acceptor end of tRNA(Asp/Asn). This chain is Aspartate--tRNA(Asp/Asn) ligase, found in Rhodopseudomonas palustris (strain TIE-1).